Here is a 493-residue protein sequence, read N- to C-terminus: Cysteine--tRNA ligase (493 aa).

C41 lines the Zn(2+) pocket. A 'HIGH' region motif is present at residues 43–53 (PTVYNYPHIGN). Zn(2+) is bound by residues C231, H256, and E260. A 'KMSKS' region motif is present at residues 296 to 300 (KMSKS). K299 contributes to the ATP binding site.

This sequence belongs to the class-I aminoacyl-tRNA synthetase family. In terms of assembly, monomer. Zn(2+) is required as a cofactor.

The protein resides in the cytoplasm. It catalyses the reaction tRNA(Cys) + L-cysteine + ATP = L-cysteinyl-tRNA(Cys) + AMP + diphosphate. In Novosphingobium aromaticivorans (strain ATCC 700278 / DSM 12444 / CCUG 56034 / CIP 105152 / NBRC 16084 / F199), this protein is Cysteine--tRNA ligase.